A 571-amino-acid polypeptide reads, in one-letter code: Proline--tRNA ligase (571 aa).

This sequence belongs to the class-II aminoacyl-tRNA synthetase family. ProS type 1 subfamily. As to quaternary structure, homodimer.

The protein resides in the cytoplasm. The enzyme catalyses tRNA(Pro) + L-proline + ATP = L-prolyl-tRNA(Pro) + AMP + diphosphate. Its function is as follows. Catalyzes the attachment of proline to tRNA(Pro) in a two-step reaction: proline is first activated by ATP to form Pro-AMP and then transferred to the acceptor end of tRNA(Pro). As ProRS can inadvertently accommodate and process non-cognate amino acids such as alanine and cysteine, to avoid such errors it has two additional distinct editing activities against alanine. One activity is designated as 'pretransfer' editing and involves the tRNA(Pro)-independent hydrolysis of activated Ala-AMP. The other activity is designated 'posttransfer' editing and involves deacylation of mischarged Ala-tRNA(Pro). The misacylated Cys-tRNA(Pro) is not edited by ProRS. The polypeptide is Proline--tRNA ligase (Histophilus somni (strain 2336) (Haemophilus somnus)).